We begin with the raw amino-acid sequence, 101 residues long: Small ribosomal subunit protein uS14 (101 aa).

Belongs to the universal ribosomal protein uS14 family. As to quaternary structure, part of the 30S ribosomal subunit. Contacts proteins S3 and S10.

Binds 16S rRNA, required for the assembly of 30S particles and may also be responsible for determining the conformation of the 16S rRNA at the A site. In Pseudomonas putida (strain ATCC 47054 / DSM 6125 / CFBP 8728 / NCIMB 11950 / KT2440), this protein is Small ribosomal subunit protein uS14.